The sequence spans 692 residues: Protein arginine N-methyltransferase 7 (692 aa).

SAM-dependent MTase PRMT-type domains are found at residues 14 to 359 (ENSW…YSLW) and 368 to 692 (AKTV…QEKR).

Belongs to the class I-like SAM-binding methyltransferase superfamily. Protein arginine N-methyltransferase family. PRMT7 subfamily.

In terms of biological role, essential arginine methyltransferase that can both catalyze the formation of omega-N monomethylarginine (MMA) and symmetrical dimethylarginine (sDMA). Specifically mediates the symmetrical dimethylation of arginine residues in the small nuclear ribonucleoproteins SmD1 and SmD3. The polypeptide is Protein arginine N-methyltransferase 7 (Art7) (Drosophila persimilis (Fruit fly)).